A 338-amino-acid polypeptide reads, in one-letter code: DNA-directed RNA polymerase subunit alpha (338 aa).

Residues 1 to 233 are alpha N-terminal domain (alpha-NTD); the sequence is MLREEVAVST…DLFIPFLHAE (233 aa). The segment at 266–338 is alpha C-terminal domain (alpha-CTD); sequence IALKFIFIDQ…IDLPKNKFSN (73 aa).

Belongs to the RNA polymerase alpha chain family. As to quaternary structure, in plastids the minimal PEP RNA polymerase catalytic core is composed of four subunits: alpha, beta, beta', and beta''. When a (nuclear-encoded) sigma factor is associated with the core the holoenzyme is formed, which can initiate transcription.

Its subcellular location is the plastid. The protein localises to the chloroplast. It catalyses the reaction RNA(n) + a ribonucleoside 5'-triphosphate = RNA(n+1) + diphosphate. Its function is as follows. DNA-dependent RNA polymerase catalyzes the transcription of DNA into RNA using the four ribonucleoside triphosphates as substrates. In Nandina domestica (Heavenly bamboo), this protein is DNA-directed RNA polymerase subunit alpha.